We begin with the raw amino-acid sequence, 350 residues long: UDP-glucose 4-epimerase 2 (350 aa).

NAD(+) is bound by residues 12-14 (GYI), 33-37 (DNYDN), 63-64 (DL), F85, and K89. 129-131 (SAT) serves as a coordination point for substrate. Y153 functions as the Proton acceptor in the catalytic mechanism. NAD(+)-binding residues include K157 and Y181. Substrate is bound by residues 181-183 (YFN), 202-204 (NNL), 220-222 (TVF), R235, and 297-300 (RPGD).

This sequence belongs to the NAD(P)-dependent epimerase/dehydratase family. In terms of assembly, forms homodimers and heterodimers. It depends on NAD(+) as a cofactor. As to expression, widely expressed. Most highly expressed in stems and flowers.

Its subcellular location is the cytoplasm. The catalysed reaction is UDP-alpha-D-glucose = UDP-alpha-D-galactose. The protein operates within carbohydrate metabolism; galactose metabolism. Its activity is regulated as follows. Enhanced activity by NaCl. Enhanced activity by NAD(+). Strongly inhibited by UDP. Catalyzes the interconversion between UDP-glucose and UDP-galactose. Cooperates with UGE3 in pollen development and with UGE4 in cell wall carbohydrate biosynthesis and growth. The protein is UDP-glucose 4-epimerase 2 of Arabidopsis thaliana (Mouse-ear cress).